Consider the following 259-residue polypeptide: Type III pantothenate kinase (259 aa).

6 to 13 (DVGNTNCT) contacts ATP. 107–110 (GSDR) provides a ligand contact to substrate. Residue Asp-109 is the Proton acceptor of the active site. Asp-129 provides a ligand contact to K(+). Thr-132 is a binding site for ATP. Thr-184 provides a ligand contact to substrate.

Belongs to the type III pantothenate kinase family. Homodimer. NH4(+) is required as a cofactor. It depends on K(+) as a cofactor.

It localises to the cytoplasm. The enzyme catalyses (R)-pantothenate + ATP = (R)-4'-phosphopantothenate + ADP + H(+). It participates in cofactor biosynthesis; coenzyme A biosynthesis; CoA from (R)-pantothenate: step 1/5. Catalyzes the phosphorylation of pantothenate (Pan), the first step in CoA biosynthesis. The chain is Type III pantothenate kinase from Listeria monocytogenes serotype 4b (strain CLIP80459).